The primary structure comprises 545 residues: MWLDRRGWLRVLGHWRYDLRRPSFTRTWSGDKGPMAETVSTQVGTEGGLRASHQQNGDAGGDAKVELSPGPPKPAGREVEPAPVGGEHPSAAAPGPGKHKKRRGATRERVVPPPKKRRTGVSFGDEHFAETSYYFEGGLRKVRPYYFDFRTYCKGRWVGHSLLHVFSTEFRAQPLAYYEAAVRAGRLQLNEKPVQDLNIVLKDNDFLRNTVHRHEPPVTAEPIRLLAENEDVVVVDKPSSIPVHPCGRFRHNTVIFILGKEHQLKELHPLHRLDRLTSGVLMFAKTAAVSERIHEQVRDRQLEKEYVCRVEGEFPTEEVTCKEPILVVSYKVGVCRVDPRGKPCETVFQRLSYNGQSSVVRCRPLTGRTHQIRVHLQFLGHPILNDPIYNSVAWGPSRGRGGYIPKTNEELLRDLVAEHQAKQSLDVLDLCEGDLSPGLTDSTAPSSELGKDDLEELAAAAQKMEEVAEAAPQELDTIALASEKAVETDVMNQETDPLCAECRLVRQDPLPQDLVMFLHALRYKGPGFEYFSPMPAWAQDDWQKD.

Positions 48–121 are disordered; the sequence is GLRASHQQNG…PPPKKRRTGV (74 aa). A Phosphoserine modification is found at Ser-68. The active site involves Asp-274. Phosphothreonine is present on Thr-477.

This sequence belongs to the pseudouridine synthase RluA family.

The enzyme catalyses a uridine in mRNA = a pseudouridine in mRNA. In terms of biological role, pseudouridine synthase that catalyzes pseudouridylation of mRNAs. The sequence is that of Pseudouridylate synthase RPUSD2 from Homo sapiens (Human).